Here is a 107-residue protein sequence, read N- to C-terminus: Acidic phospholipase A2 2 (107 aa).

Disulfide bonds link C26–C100, C28–C38, C37–C82, C43–C107, C44–C75, and C62–C73. Ca(2+) is bound by residues Y27, G29, and G31. Residue H41 is part of the active site. D42 is a binding site for Ca(2+). Residue D76 is part of the active site.

The cofactor is Ca(2+). In terms of tissue distribution, expressed by the venom gland.

It localises to the secreted. The enzyme catalyses a 1,2-diacyl-sn-glycero-3-phosphocholine + H2O = a 1-acyl-sn-glycero-3-phosphocholine + a fatty acid + H(+). In terms of biological role, PLA2 catalyzes the calcium-dependent hydrolysis of the 2-acyl groups in 3-sn-phosphoglycerides. This chain is Acidic phospholipase A2 2, found in Bothrops insularis (Golden lancehead).